The primary structure comprises 3974 residues: Hybrid PKS-NRPS synthetase 1 (3974 aa).

Positions 5-442 (SQKIAIIGSA…GTNAHCLIES (438 aa)) constitute a Ketosynthase family 3 (KS3) domain. Active-site for beta-ketoacyl synthase activity residues include C179, H316, and H362. Positions 561–883 (IFTGQGAQWA…TGILERGLDD (323 aa)) are malonyl-CoA:ACP transacylase (MAT) domain. The interval 954-1079 (HPLLGSRLSA…HDSELGIPES (126 aa)) is N-terminal hotdog fold. Residues 954–1251 (HPLLGSRLSA…QVESVKLVPV (298 aa)) form a dehydratase (DH) domain region. In terms of domain architecture, PKS/mFAS DH spans 954–1257 (HPLLGSRLSA…LVPVITPDAS (304 aa)). H986 acts as the Proton acceptor; for dehydratase activity in catalysis. The segment at 1107-1257 (TTPISSAKIY…LVPVITPDAS (151 aa)) is C-terminal hotdog fold. Residue D1165 is the Proton donor; for dehydratase activity of the active site. The methyltransferase (MT) domain stretch occupies residues 1398–1529 (PWNTELRNAI…GYLLLVAKTG (132 aa)). The tract at residues 2108 to 2282 (TYFLAGMTDS…ASIMDTGVVT (175 aa)) is ketoreductase (KR) domain. The segment at 2492 to 2516 (AGRSASPGASCSDRSLSTRSDETRS) is disordered. Polar residues predominate over residues 2498-2509 (PGASCSDRSLST). The tract at residues 2560–2994 (APLSPGQAQL…LERLRTSSDQ (435 aa)) is condensation (C) domain. The adenylation (A) (KR) domain stretch occupies residues 3021–3423 (DAMAEKYFDQ…DGSLILLGRM (403 aa)). Residues 3537–3613 (SADQLVEAEV…EMAEKMASVR (77 aa)) form the Carrier domain. Position 3573 is an O-(pantetheine 4'-phosphoryl)serine (S3573). Positions 3657–3940 (VVLTGAADLL…KLEMGEWIAL (284 aa)) are reductase (RED) domain.

This sequence in the C-terminal section; belongs to the NRP synthetase family.

Its pathway is secondary metabolite biosynthesis. Its function is as follows. Hybrid PKS-NRPS synthetase; part of the hps1-dma1 gene cluster that probably mediates the biosynthesis a derivative of cyclopiazonic acid (CPA). The hybrid polyketide synthase-nonribosomal peptide synthetase (PKS-NRPS) nps1 might incorporates acetyl-CoA, malonyl-CoA, and tryptophan (Trp) and utilizes a C-terminal redox-incompetent reductase domain to make and release the tryptophan tetramic acid, cyclo-acetoacetyl-L-tryptophan (c-AATrp), as the first intermediate in the pathway. In addition, the cluster also includes the tryptophan dimethylallyltransferase dma1, the FAD-dependent oxidoreductase toxD, the cytochrome P450 monooxygenase cyp3.1 and the methyltransferase DOTSEDRAFT_139328; the latter 2 being not present in all CPA-producing fungi but involved in additional modifications that occur in biosynthesis the of a range of CPA and CPA-like products. Further studies are required to clarify whether the CPA-like hps1-dma1 cluster is functional or a non-functional relic reflecting evolution of D.septosporum. The protein is Hybrid PKS-NRPS synthetase 1 of Dothistroma septosporum (strain NZE10 / CBS 128990) (Red band needle blight fungus).